The following is a 214-amino-acid chain: Adenylate kinase (214 aa).

10–15 contributes to the ATP binding site; it reads GAGKGT. An NMP region spans residues 30 to 59; sequence STGDMLRAAVKSGSELGKQAKDIMDAGKLV. Residues threonine 31, arginine 36, 57-59, 85-88, and glutamine 92 each bind AMP; these read KLV and GFPR. The tract at residues 122-159 is LID; that stretch reads GRRVHAPSGRVYHVKFNPPKVEGKDDVTGEELTTRKDD. ATP-binding positions include arginine 123 and 132 to 133; that span reads VY. 2 residues coordinate AMP: arginine 156 and arginine 167. Lysine 192 carries the N6-acetyllysine modification. Residue lysine 200 coordinates ATP.

Belongs to the adenylate kinase family. Monomer.

The protein resides in the cytoplasm. The catalysed reaction is AMP + ATP = 2 ADP. It functions in the pathway purine metabolism; AMP biosynthesis via salvage pathway; AMP from ADP: step 1/1. Functionally, catalyzes the reversible transfer of the terminal phosphate group between ATP and AMP. Plays an important role in cellular energy homeostasis and in adenine nucleotide metabolism. This is Adenylate kinase from Escherichia coli O45:K1 (strain S88 / ExPEC).